We begin with the raw amino-acid sequence, 1290 residues long: Vacuolating cytotoxin autotransporter (1290 aa).

A signal peptide spans 1–33; it reads MEIQQTHRKINRPLVSLALVGALVSITPQQSHA. Residues 326–374 are disordered; the sequence is PPEGGYKDKPKDKPSNTTQNNANNNQQNSAQNNSNTQVINPPNSAQKTE. Positions 330-339 are enriched in basic and acidic residues; sequence GYKDKPKDKP. Over residues 340–362 the composition is skewed to low complexity; sequence SNTTQNNANNNQQNSAQNNSNTQ. Residues 363–374 are compositionally biased toward polar residues; that stretch reads VINPPNSAQKTE. An Autotransporter domain is found at 1018–1290; that stretch reads KYEKPTNVWA…ASNLGMRYSF (273 aa).

The protein localises to the periplasm. It is found in the secreted. Its subcellular location is the cell surface. The protein resides in the cell outer membrane. Induces vacuolation of eukaryotic cells. Causes ulceration and gastric lesions. The sequence is that of Vacuolating cytotoxin autotransporter (vacA) from Helicobacter pylori (strain ATCC 700392 / 26695) (Campylobacter pylori).